The sequence spans 348 residues: Bifunctional dihydroflavonol 4-reductase/flavanone 4-reductase (348 aa).

The NADP(+) site is built by K44 and Y163.

Belongs to the NAD(P)-dependent epimerase/dehydratase family. Dihydroflavonol-4-reductase subfamily.

The enzyme catalyses a (2R,3S,4S)-leucoanthocyanidin + NADP(+) = a (2R,3R)-dihydroflavonol + NADPH + H(+). It catalyses the reaction (2S)-flavan-4-ol + NADP(+) = (2S)-flavanone + NADPH + H(+). Functionally, bifunctional enzyme involved in flavonoid metabolism. May use dihydroquercetin, dihydrokaempferol, eriodictyol, garbanzol (5-deoxydihydrokaempferol), dihydrofisetin (5-deoxydihydroquercetin), naringenin to a low extent (10%), but not 5-deoxynaringenin or butin (5-deoxyeriodictyol) as substrate. In Malus domestica (Apple), this protein is Bifunctional dihydroflavonol 4-reductase/flavanone 4-reductase (DFR).